Consider the following 205-residue polypeptide: Probable GTP-binding protein EngB (205 aa).

Residues 22 to 196 (NLPEVAFVGR…LKVLDEFIHK (175 aa)) enclose the EngB-type G domain. Residues 30–37 (GRSNVGKS), 57–61 (GRTQL), 76–79 (DLPG), 143–146 (TKVD), and 175–177 (FSA) contribute to the GTP site. Residues Ser-37 and Thr-59 each contribute to the Mg(2+) site.

This sequence belongs to the TRAFAC class TrmE-Era-EngA-EngB-Septin-like GTPase superfamily. EngB GTPase family. It depends on Mg(2+) as a cofactor.

In terms of biological role, necessary for normal cell division and for the maintenance of normal septation. The polypeptide is Probable GTP-binding protein EngB (Desulforamulus reducens (strain ATCC BAA-1160 / DSM 100696 / MI-1) (Desulfotomaculum reducens)).